Reading from the N-terminus, the 225-residue chain is Urease accessory protein UreF (225 aa).

The protein belongs to the UreF family. UreD, UreF and UreG form a complex that acts as a GTP-hydrolysis-dependent molecular chaperone, activating the urease apoprotein by helping to assemble the nickel containing metallocenter of UreC. The UreE protein probably delivers the nickel.

It is found in the cytoplasm. Required for maturation of urease via the functional incorporation of the urease nickel metallocenter. The protein is Urease accessory protein UreF of Geobacillus kaustophilus (strain HTA426).